The sequence spans 176 residues: Inner membrane-spanning protein YciB (176 aa).

The next 5 helical transmembrane spans lie at 22–42, 50–70, 81–101, 121–141, and 149–169; these read IYYA…YTWL, VALI…YYHN, IYSL…KPLI, IAWA…AFWL, and FKVF…GIYI.

This sequence belongs to the YciB family.

It is found in the cell inner membrane. Functionally, plays a role in cell envelope biogenesis, maintenance of cell envelope integrity and membrane homeostasis. The protein is Inner membrane-spanning protein YciB of Sodalis glossinidius (strain morsitans).